A 269-amino-acid chain; its full sequence is Type III pantothenate kinase (269 aa).

9 to 16 (DVGNTSVK) lines the ATP pocket. Substrate-binding positions include Tyr-106 and 113-116 (GADR). The active-site Proton acceptor is the Asp-115. Residue Asp-137 participates in K(+) binding. Thr-140 lines the ATP pocket. Thr-193 is a substrate binding site.

Belongs to the type III pantothenate kinase family. As to quaternary structure, homodimer. NH4(+) is required as a cofactor. Requires K(+) as cofactor.

Its subcellular location is the cytoplasm. It catalyses the reaction (R)-pantothenate + ATP = (R)-4'-phosphopantothenate + ADP + H(+). It participates in cofactor biosynthesis; coenzyme A biosynthesis; CoA from (R)-pantothenate: step 1/5. Functionally, catalyzes the phosphorylation of pantothenate (Pan), the first step in CoA biosynthesis. The sequence is that of Type III pantothenate kinase from Lawsonia intracellularis (strain PHE/MN1-00).